Consider the following 37-residue polypeptide: Small ribosomal subunit protein eS32 (37 aa).

It belongs to the eukaryotic ribosomal protein eS32 family. As to quaternary structure, part of the small ribosomal subunit.

The sequence is that of Small ribosomal subunit protein eS32 from Pyrococcus furiosus (strain ATCC 43587 / DSM 3638 / JCM 8422 / Vc1).